A 191-amino-acid chain; its full sequence is dTTP/UTP pyrophosphatase (191 aa).

The active-site Proton acceptor is aspartate 71.

Belongs to the Maf family. YhdE subfamily. A divalent metal cation serves as cofactor.

The protein localises to the cytoplasm. It carries out the reaction dTTP + H2O = dTMP + diphosphate + H(+). The catalysed reaction is UTP + H2O = UMP + diphosphate + H(+). In terms of biological role, nucleoside triphosphate pyrophosphatase that hydrolyzes dTTP and UTP. May have a dual role in cell division arrest and in preventing the incorporation of modified nucleotides into cellular nucleic acids. The chain is dTTP/UTP pyrophosphatase from Hyphomonas neptunium (strain ATCC 15444).